Reading from the N-terminus, the 323-residue chain is O-phosphoserine sulfhydrylase (323 aa).

At K51 the chain carries N6-(pyridoxal phosphate)lysine. Residues N81 and 184-188 contribute to the pyridoxal 5'-phosphate site; that span reads GTTGT. R220 is a binding site for substrate. S265 contacts pyridoxal 5'-phosphate.

It belongs to the cysteine synthase/cystathionine beta-synthase family. As to quaternary structure, homodimer. Pyridoxal 5'-phosphate serves as cofactor.

The enzyme catalyses [CysO sulfur-carrier protein]-C-terminal-Gly-aminoethanethioate + O-phospho-L-serine + H(+) = [CysO sulfur-carrier protein]-Gly-NH-CH2-C(O)-S-L-Cys + phosphate. The protein operates within amino-acid biosynthesis; L-cysteine biosynthesis. Functionally, catalyzes the formation of a covalent CysO-cysteine adduct via a sulfur transfer, using the thiocarboxylated sulfur carrier protein CysO-COSH as sulfur donor and O-phospho-L-serine (OPS) as sulfur acceptor. Can also use sodium sulfide as sulfur donor in vitro, albeit with less efficiency. This is O-phosphoserine sulfhydrylase (cysM) from Mycobacterium bovis (strain ATCC BAA-935 / AF2122/97).